The sequence spans 261 residues: Pantothenate synthetase (261 aa).

29 to 36 is an ATP binding site; the sequence is MGALHNGH. The Proton donor role is filled by His36. Gln60 is a (R)-pantoate binding site. Gln60 is a beta-alanine binding site. 147–150 is a binding site for ATP; the sequence is GEKD. Gln153 is a binding site for (R)-pantoate. 184–187 is a binding site for ATP; it reads LSSR.

The protein belongs to the pantothenate synthetase family. As to quaternary structure, homodimer.

It is found in the cytoplasm. The catalysed reaction is (R)-pantoate + beta-alanine + ATP = (R)-pantothenate + AMP + diphosphate + H(+). It participates in cofactor biosynthesis; (R)-pantothenate biosynthesis; (R)-pantothenate from (R)-pantoate and beta-alanine: step 1/1. Its function is as follows. Catalyzes the condensation of pantoate with beta-alanine in an ATP-dependent reaction via a pantoyl-adenylate intermediate. In Francisella tularensis subsp. novicida (strain U112), this protein is Pantothenate synthetase.